A 577-amino-acid chain; its full sequence is Eukaryotic translation initiation factor 3 subunit D (577 aa).

A disordered region spans residues 103–177 (DSTKTRFGRG…KDYDKPQRNR (75 aa)). The segment covering 166–177 (GWKDYDKPQRNR) has biased composition (basic and acidic residues). Positions 305 to 319 (TLDMVTVNENAADAP) are RNA gate. Residues 558 to 577 (GSFEDDGEGDVIEENVEEED) are disordered. The span at 560–577 (FEDDGEGDVIEENVEEED) shows a compositional bias: acidic residues.

The protein belongs to the eIF-3 subunit D family. Component of the eukaryotic translation initiation factor 3 (eIF-3) complex.

It localises to the cytoplasm. Functionally, mRNA cap-binding component of the eukaryotic translation initiation factor 3 (eIF-3) complex, which is involved in protein synthesis of a specialized repertoire of mRNAs and, together with other initiation factors, stimulates binding of mRNA and methionyl-tRNAi to the 40S ribosome. The eIF-3 complex specifically targets and initiates translation of a subset of mRNAs involved in cell proliferation. In the eIF-3 complex, eif3d specifically recognizes and binds the 7-methylguanosine cap of a subset of mRNAs. The sequence is that of Eukaryotic translation initiation factor 3 subunit D from Sclerotinia sclerotiorum (strain ATCC 18683 / 1980 / Ss-1) (White mold).